A 358-amino-acid polypeptide reads, in one-letter code: uncharacterized protein (358 aa).

It belongs to the SMP-30/CGR1 family.

This is an uncharacterized protein from Saccharomyces cerevisiae (strain ATCC 204508 / S288c) (Baker's yeast).